The following is a 558-amino-acid chain: Asparagine--tRNA ligase, cytoplasmic (558 aa).

Ser71 is subject to Phosphoserine. A disordered region spans residues 79–101 (MWHREQMKSESREKKEAEDSLRR). A compositionally biased stretch (basic and acidic residues) spans 81-101 (HREQMKSESREKKEAEDSLRR). N6-acetyllysine is present on residues Lys254 and Lys500.

The protein belongs to the class-II aminoacyl-tRNA synthetase family. As to quaternary structure, homodimer.

The protein localises to the cytoplasm. The catalysed reaction is tRNA(Asn) + L-asparagine + ATP = L-asparaginyl-tRNA(Asn) + AMP + diphosphate + H(+). Functionally, catalyzes the attachment of asparagine to tRNA(Asn) in a two-step reaction: asparagine is first activated by ATP to form Asn-AMP and then transferred to the acceptor end of tRNA(Asn). In addition to its essential role in protein synthesis, acts as a signaling molecule that induced migration of CCR3-expressing cells. Has an essential role in the development of the cerebral cortex, being required for proper proliferation of radial glial cells. The protein is Asparagine--tRNA ligase, cytoplasmic of Macaca fascicularis (Crab-eating macaque).